The following is a 1848-amino-acid chain: Cellulose-binding protein A (1848 aa).

A signal peptide spans 1-28 (MQKKKSLNLLLALMMVFALVLPSIPALA). In terms of domain architecture, CBM3 spans 29–190 (ATSSMSVEFY…GAKVLGTAPG (162 aa)). 9 Cohesin domains span residues 291–428 (VTAT…TVTI), 435–570 (MQIS…SVTI), 668–801 (VTAT…SVTI), 810–943 (VTAT…SVTI), 952–1085 (VTAT…SVTI), 1094–1227 (VTAT…SVTI), 1236–1369 (VTAT…SVTI), 1377–1511 (VKAT…RLTI), and 1709–1847 (FAVK…SVKV).

In terms of processing, the N-terminus is blocked. Post-translationally, glycosylated.

Its subcellular location is the secreted. Its function is as follows. Binds to cellulose fibers and coordinates cellulase enzymes. In Clostridium cellulovorans, this protein is Cellulose-binding protein A (cbpA).